A 148-amino-acid polypeptide reads, in one-letter code: UPF0756 membrane protein YeaL (148 aa).

A run of 4 helical transmembrane segments spans residues 14–34 (ALGF…LIIV), 51–71 (LSIG…SGTL), 86–106 (LVAI…VTLM), and 121–141 (VLGV…AGLV).

Belongs to the UPF0756 family.

It localises to the cell membrane. The polypeptide is UPF0756 membrane protein YeaL (Escherichia coli O127:H6 (strain E2348/69 / EPEC)).